A 1376-amino-acid chain; its full sequence is MANTLVGRKRIRKFFGKIREVAEMPNLIEVQKASYDQFLMVDEPEGGRADEGLQSVFKSVFPISDFASTALLEFVRYTFEQPKYDVDECRQRGITFAAPLKVTLRLIVFDVDPDTGAKSVKDIKEQDVYMGDMPLMTDNGTFIVNGTERVIVSQMHRSPGVFFDHDKGKTHSSGKLLFAARIIPYRGSWLDVEFDAKDIVHVRIDRKRKLPVTSLLFALGLDGEEILSTFYNRVAYQRDGADWRVPFDAERLKGFKASVDLIDADSGEVVLEAGKKLNARNARLIGEKGTKFLRAADEDLIGQYIAEDLVNMKTGEIWAEAGDEISEKLLKSLDDVGVTELPVLDIDHVNVGPYIRNTLAVDKNSAREGALFDIYRVMRPGEPPTLDTAEAMFHSLFFDSERYDLSAVGRVKMNMRLDLDAADTVRTLRREDMLAVVKALVDLRDGKGEIDDIDHLGNRRVRSVGELMENQYRLGLLRMERAIKERMSSVDIDTVMPQDLINAKPAAAAVREFFGSSQLSQFMDQTNPLSEVTHKRRLSALGPGGLTRERAGFEVRDVHPTHYGRICPIETPEGPNIGLINSLATFARVNKYGFIETPFRRVKDGVVTDEVAYLSAMEEAKYYVAQANAGMDEGRKLTDDLVVCRRAGEVIVVAPDRVDLMDVSPKQLVSVAAALIPFLENDDANRALMGSNMQRQAVPLVRADAPFVGTGMEAVVARDSGAAIAARRSGIVDQVDATRIVIRASEETDPTKPGVDIYRLQKFQRSNQSTCITQKPLVRVGEPVKKGEIIADGPSTEFGELALGRNVLVAFMPWNGYNFEDSILLSERIVKDDVFTSIHIEEFEVMARDTKLGPEEITRDIPNVSEEALKNLDEAGIVYIGAEVHAGDILVGKITPKGESPMTPEEKLLRAIFGEKASDVRDTSLRVPPGVTGTIVEVRVFNRHGVDKDERAQAIEREEIERLAKDRDDEQTILDRNTYARLAEVLIGQSPIAGPKGFRKDTTLTREIISEYPRSQWWQFAVVDDRMMTEIEAMQKQYDESKKRLEQRFLDKVEKLQRGDELPPGVMKMVKVFVAVKRKIQPGDKMAGRHGNKGVVSRIVPIEDMPFLEDGTHADIVLNPLGVPSRMNVGQILETHLGWAAAGLGRKVSKAVDAYLKNQDIAPLRAEMEAIYSPSELEGLSDEALAEAGNNVRRGVPMATPVFNGAKEADIETMLEMAGLDRSAQSTLYDGRTGEPFDRKVTMGYIYMLKLHHLVDDKIHARSIGPYSLVTQQPLGGKAQFGGQRFGEMEVWALEAYGAAYTLQEMLTVKSDDVAGRTKVYEAIVRGDDTFEAGIPESFNVLVKEMRSLGLNVELTSSKQQQAANDQIEPPADAAE.

Belongs to the RNA polymerase beta chain family. As to quaternary structure, the RNAP catalytic core consists of 2 alpha, 1 beta, 1 beta' and 1 omega subunit. When a sigma factor is associated with the core the holoenzyme is formed, which can initiate transcription.

The catalysed reaction is RNA(n) + a ribonucleoside 5'-triphosphate = RNA(n+1) + diphosphate. Its function is as follows. DNA-dependent RNA polymerase catalyzes the transcription of DNA into RNA using the four ribonucleoside triphosphates as substrates. This is DNA-directed RNA polymerase subunit beta from Methylorubrum extorquens (strain PA1) (Methylobacterium extorquens).